Consider the following 1035-residue polypeptide: MAKKRVYELAKELNTTSKRLMEKLEEINIVVKNHMSFLEEDELEALYDHIGVIRHKDDKSNTDDNKTASAHSVAQHSSEAMKELKKEAKKAPRIIRTTEIYLDSKDEEIKEIKANDAKSQKKPEEKRKKNDFVRVETETSGLRPGLVRETKPEYMRILEEQKKSEASKAQTNEKKDAEKNSVKEVVKKEEGSKQTAEIKDGSVNMEGKVLEEVKATVADSATNVNLNESIDKDKKTNDNRQVSTDNSAVNNEENAADTLNKKDMDKKNNNKKNEAKKNAEKKNEAKKNEKNDNKGGNAKKNEHRSPDMKKNDSNRPQDANKQNSKAAADKNREEGRTGSKKSLEIPKVELTTSQKEEFNSQRAERREYNKDAEKDSKRELRKEQPRSAISGGRNKNHKVIKNVFNSRKGVSEVLSDDFEMDDFYFGGSKKSRKIKKKKEEKKEEKPAPPKPVVTSIKIAAPITVKELAEALKKTSAEVIKKLMSLGIMATLNQELDFDTAAIVADEFGVKAEEEVVVNEEDILFDDSDDPNDPEAVPRPPVVVVMGHVDHGKTSLLDAIKKTNVTEKEAGGITQHIGAYMVKINNRNITFLDTPGHEAFTAMRARGAQVTDIAVLVVAADDGVMPQTIEAINHAKAANVTIIVAINKIDKPTANPEKVKQELTEYGLIPEEWGGDTIFVEVSAKKGVNIDYLLEMILLAADMLELKANPNKQAKGTVIEAKLDKDKGPVATVLVQRGTLCVGDSIIVGTTTGRIRAMTDDKGHRIKKAGPSTPVEILGLHEVPEAGETFYVITDEKTAKQLIEKRKLKQREQLLKASARVTLDDLFNQIKEGKVKELNIIVKADVQGSVEALKQSLEKLSNDEVRVKIIHGGVGSVTETDVTLAQVSNAIIIGFNVRPPANVIDAAKKAGVDLRLYTIIYNAIEDIEAAMKGMLEPTYKEVVIGHVEIRQIFKVSGVGTVGGGYVTDGKITRNANIRLVRDGIVVHEGKLGSLKRFKDDVREVAEGYECGLSIEKFNDIKEGDVVEVYVMEEVKE.

The span at 56 to 66 (KDDKSNTDDNK) shows a compositional bias: basic and acidic residues. 2 disordered regions span residues 56 to 80 (KDDK…SSEA) and 114 to 402 (ANDA…VIKN). Residues 68–78 (ASAHSVAQHSS) show a composition bias toward polar residues. Composition is skewed to basic and acidic residues over residues 114-137 (ANDA…RVET) and 146-200 (LVRE…EIKD). The segment covering 219 to 228 (DSATNVNLNE) has biased composition (polar residues). The span at 229-238 (SIDKDKKTND) shows a compositional bias: basic and acidic residues. Residues 239–253 (NRQVSTDNSAVNNEE) show a composition bias toward polar residues. A compositionally biased stretch (basic and acidic residues) spans 259-315 (LNKKDMDKKNNNKKNEAKKNAEKKNEAKKNEKNDNKGGNAKKNEHRSPDMKKNDSNR). The span at 316–325 (PQDANKQNSK) shows a compositional bias: polar residues. 2 stretches are compositionally biased toward basic and acidic residues: residues 327-347 (AADK…EIPK) and 354-385 (QKEE…KEQP). The tr-type G domain maps to 537 to 706 (PRPPVVVVMG…LLAADMLELK (170 aa)). The interval 546-553 (GHVDHGKT) is G1. 546–553 (GHVDHGKT) lines the GTP pocket. Positions 571-575 (GITQH) are G2. The interval 592–595 (DTPG) is G3. GTP-binding positions include 592 to 596 (DTPGH) and 646 to 649 (NKID). Residues 646 to 649 (NKID) are G4. Residues 682 to 684 (SAK) are G5.

It belongs to the TRAFAC class translation factor GTPase superfamily. Classic translation factor GTPase family. IF-2 subfamily.

Its subcellular location is the cytoplasm. One of the essential components for the initiation of protein synthesis. Protects formylmethionyl-tRNA from spontaneous hydrolysis and promotes its binding to the 30S ribosomal subunits. Also involved in the hydrolysis of GTP during the formation of the 70S ribosomal complex. The chain is Translation initiation factor IF-2 from Acetivibrio thermocellus (strain ATCC 27405 / DSM 1237 / JCM 9322 / NBRC 103400 / NCIMB 10682 / NRRL B-4536 / VPI 7372) (Clostridium thermocellum).